A 67-amino-acid chain; its full sequence is Large ribosomal subunit protein bL35 (67 aa).

The protein belongs to the bacterial ribosomal protein bL35 family.

The protein is Large ribosomal subunit protein bL35 of Bartonella quintana (strain Toulouse) (Rochalimaea quintana).